Reading from the N-terminus, the 30-residue chain is Photosystem I reaction center subunit XII (30 aa).

A helical membrane pass occupies residues 7-26 (IFVALLFALVSAVLAIRLGK).

The protein belongs to the PsaM family.

The protein localises to the plastid. It localises to the chloroplast thylakoid membrane. The polypeptide is Photosystem I reaction center subunit XII (Porphyra purpurea (Red seaweed)).